Consider the following 598-residue polypeptide: Elongation factor 4 (598 aa).

Residues 2–184 (QHIRNFSIIA…TVVRRVPPPK (183 aa)) enclose the tr-type G domain. Residues 14–19 (DHGKST) and 131–134 (NKID) each bind GTP.

This sequence belongs to the TRAFAC class translation factor GTPase superfamily. Classic translation factor GTPase family. LepA subfamily.

It is found in the cell inner membrane. It catalyses the reaction GTP + H2O = GDP + phosphate + H(+). Functionally, required for accurate and efficient protein synthesis under certain stress conditions. May act as a fidelity factor of the translation reaction, by catalyzing a one-codon backward translocation of tRNAs on improperly translocated ribosomes. Back-translocation proceeds from a post-translocation (POST) complex to a pre-translocation (PRE) complex, thus giving elongation factor G a second chance to translocate the tRNAs correctly. Binds to ribosomes in a GTP-dependent manner. The sequence is that of Elongation factor 4 from Aromatoleum aromaticum (strain DSM 19018 / LMG 30748 / EbN1) (Azoarcus sp. (strain EbN1)).